Here is a 494-residue protein sequence, read N- to C-terminus: NADH-quinone oxidoreductase subunit N (494 aa).

Helical transmembrane passes span 9–29, 36–56, 73–93, 107–127, 131–151, 166–186, 209–229, 241–261, 278–298, 304–324, 339–359, 382–402, 416–436, and 469–489; these read VIPE…DLFL, LTYV…LSDF, PMSN…LVYS, LGGE…VMMS, FLII…LVAF, FVLG…LYGA, LIFG…AVPF, PTAV…AITI, MLTI…IMQT, LAYS…SGVV, MFYV…IMLL, FAFV…VVGF, GQIW…FYYL, and ALLA…AAII.

Belongs to the complex I subunit 2 family. NDH-1 is composed of 14 different subunits. Subunits NuoA, H, J, K, L, M, N constitute the membrane sector of the complex.

The protein resides in the cell inner membrane. The enzyme catalyses a quinone + NADH + 5 H(+)(in) = a quinol + NAD(+) + 4 H(+)(out). NDH-1 shuttles electrons from NADH, via FMN and iron-sulfur (Fe-S) centers, to quinones in the respiratory chain. The immediate electron acceptor for the enzyme in this species is believed to be ubiquinone. Couples the redox reaction to proton translocation (for every two electrons transferred, four hydrogen ions are translocated across the cytoplasmic membrane), and thus conserves the redox energy in a proton gradient. This Herminiimonas arsenicoxydans protein is NADH-quinone oxidoreductase subunit N.